The sequence spans 83 residues: Small ribosomal subunit protein uS17 (83 aa).

The protein belongs to the universal ribosomal protein uS17 family. In terms of assembly, part of the 30S ribosomal subunit.

Functionally, one of the primary rRNA binding proteins, it binds specifically to the 5'-end of 16S ribosomal RNA. The polypeptide is Small ribosomal subunit protein uS17 (Campylobacter jejuni subsp. jejuni serotype O:6 (strain 81116 / NCTC 11828)).